Consider the following 43-residue polypeptide: Metallothionein A (43 aa).

Positions 1 to 16 are beta; that stretch reads SCAGSCKCKNCRCRSC. Residues C2, C6, C8, C11, C13, C16, C20, C21, C23, C24, C28, C31, C35, and C37 each contribute to the a divalent metal cation site. The segment at 17–43 is alpha; it reads RKSCCSCCPAGCNNCAKGCVCKEPASS.

It belongs to the metallothionein superfamily. Type 1 family.

Metallothioneins have a high content of cysteine residues that bind various heavy metals. In Colinus virginianus (Northern bobwhite), this protein is Metallothionein A.